The chain runs to 99 residues: Malonate decarboxylase acyl carrier protein (99 aa).

The residue at position 25 (Ser-25) is an O-(phosphoribosyl dephospho-coenzyme A)serine.

It belongs to the MdcC family. Post-translationally, covalently binds the prosthetic group of malonate decarboxylase.

The protein localises to the cytoplasm. Functionally, subunit of malonate decarboxylase, it is an acyl carrier protein to which acetyl and malonyl thioester residues are bound via a 2'-(5''-phosphoribosyl)-3'-dephospho-CoA prosthetic group and turn over during the catalytic mechanism. The sequence is that of Malonate decarboxylase acyl carrier protein from Pseudomonas aeruginosa (strain UCBPP-PA14).